Consider the following 214-residue polypeptide: uncharacterized protein (214 aa).

A helical membrane pass occupies residues 9–31 (FLYFAISVLVNLLFLKILYIYLF). Residues 53–74 (APPKKPGKPQKKVVKKKPEAVS) are disordered. The segment covering 54-67 (PPKKPGKPQKKVVK) has biased composition (basic residues).

It is found in the membrane. This is an uncharacterized protein from Aquifex aeolicus (strain VF5).